The sequence spans 202 residues: N-(5'-phosphoribosyl)anthranilate isomerase (202 aa).

It belongs to the TrpF family.

It catalyses the reaction N-(5-phospho-beta-D-ribosyl)anthranilate = 1-(2-carboxyphenylamino)-1-deoxy-D-ribulose 5-phosphate. The protein operates within amino-acid biosynthesis; L-tryptophan biosynthesis; L-tryptophan from chorismate: step 3/5. The sequence is that of N-(5'-phosphoribosyl)anthranilate isomerase from Listeria monocytogenes serotype 4b (strain CLIP80459).